A 211-amino-acid polypeptide reads, in one-letter code: Probable GTP-binding protein EngB (211 aa).

The EngB-type G domain maps to 30-204 (EGFEVAFAGR…YTVLADWMEL (175 aa)). GTP is bound by residues 38-45 (GRSNAGKS), 64-68 (GRTQL), 82-85 (DLPG), 149-152 (TKAD), and 182-185 (LFSA). 2 residues coordinate Mg(2+): Ser-45 and Thr-66.

The protein belongs to the TRAFAC class TrmE-Era-EngA-EngB-Septin-like GTPase superfamily. EngB GTPase family. Requires Mg(2+) as cofactor.

Its function is as follows. Necessary for normal cell division and for the maintenance of normal septation. This chain is Probable GTP-binding protein EngB, found in Pseudomonas savastanoi pv. phaseolicola (strain 1448A / Race 6) (Pseudomonas syringae pv. phaseolicola (strain 1448A / Race 6)).